The sequence spans 247 residues: Disease resistance protein BAK6 (247 aa).

The signal sequence occupies residues 1–24 (MAAVQFAAAGVLTGLLALATLASC). N-linked (GlcNAc...) asparagine glycans are attached at residues N66, N104, and N113. LRR repeat units lie at residues 90–114 (LESLQYMELFGNSLNGSIPSTLGNL), 116–138 (DLISLDLWDNLLTGPIPTTLGSI), 139–161 (STLRYLRLYENNLTGPIPPSFGN), 162–186 (LTSLLELKLHRNSLSGSIPASLGNI), 188–210 (SLQFLKLNENMLTGTVPLEVLSL), and 213–237 (VGNLTELNIARNNLDGTVRSSGLRV). N150 and N161 each carry an N-linked (GlcNAc...) asparagine glycan. N-linked (GlcNAc...) asparagine glycosylation occurs at N215.

In terms of assembly, interacts with WAK17 isoform 1; the interaction is direct. As to quaternary structure, (Microbial infection) Interacts with G.zeae CFEM1; the interaction is direct. Interacts with G.zeae CFEMN1; the interaction is direct. Interacts with G.zeae CFEM5; the interaction is direct.

Its function is as follows. Contributes to activation of the hypersensitive response, a form of programmed cell death, upon fungal infection. May sense the presence of fungal material and relay the signal to WAK17 isoform 1. The polypeptide is Disease resistance protein BAK6 (Zea mays (Maize)).